The chain runs to 436 residues: MSMFLDTAKIQVKAGNGGDGMVAFRREKYVPNGGPWGGDGGRGGNVVFVVDEGLRTLMDFRYNRHFKAQSGEKGMTKGMHGRGAEDLIVRVPQGTTVRDAETGKVLTDLVENGQEFIVARGGRGGRGNIRFATPKNPAPEISENGEPGQERELLLELKVLADVGLVGFPSVGKSTLLSVITAAKPKIGAYHFTTIVPNLGMVRTHSGESFAVADLPGLIEGASQGVGLGTQFLRHIERTRVILHVIDMSASEGRDPYEDYLAINKELESYNLRLMERPQIIVANKMDMPDSAENLKIFKEKLAANYDEFAELPQIFPISSLTKQGLATLLDATAELLDKTPEFLLYDESEMEEEAYYGFDEEAPAFEISRDDDATWVLSGDKLEKLFSMTNFDRDEAVMKFARQLRGMGVDEALRDRGAKDGDLVRIGKFEFEFVD.

The region spanning 2-160 (SMFLDTAKIQ…RELLLELKVL (159 aa)) is the Obg domain. The OBG-type G domain occupies 161–338 (ADVGLVGFPS…LLDATAELLD (178 aa)). Residues 167 to 174 (GFPSVGKS), 192 to 196 (FTTIV), 214 to 217 (DLPG), 284 to 287 (NKMD), and 319 to 321 (SSL) contribute to the GTP site. Ser-174 and Thr-194 together coordinate Mg(2+). Positions 358–436 (GFDEEAPAFE…IGKFEFEFVD (79 aa)) constitute an OCT domain.

This sequence belongs to the TRAFAC class OBG-HflX-like GTPase superfamily. OBG GTPase family. As to quaternary structure, monomer. Mg(2+) is required as a cofactor.

The protein localises to the cytoplasm. Its function is as follows. An essential GTPase which binds GTP, GDP and possibly (p)ppGpp with moderate affinity, with high nucleotide exchange rates and a fairly low GTP hydrolysis rate. Plays a role in control of the cell cycle, stress response, ribosome biogenesis and in those bacteria that undergo differentiation, in morphogenesis control. In Streptococcus sanguinis (strain SK36), this protein is GTPase Obg.